Consider the following 22-residue polypeptide: Bacteriocin serracin-P 23 kDa subunit (22 aa).

Major component of a prophage tail tube. Functionally, antibacterial activity against Gram-negative bacterium E.amylovora. The sequence is that of Bacteriocin serracin-P 23 kDa subunit from Serratia plymuthica.